The following is a 429-amino-acid chain: MKNTYNLRSITAKAINQVLDQGQSLSTVLPKLQQNITDKDKPLLQELSFGVLRVLPQLEWIIGQLMVKPLKGKQRILHYLLMVGIYQLAYTRIPAHAALAETVNGAVTLKHSQLKGLINGVLRQFQRQQLQLMECTQNNSSHHLHPEWLLTRIQKAYPQQWQQLINANNKKPPMWLRVNRIYHSRDEYLTLLRKSGIDAEPAPKSPSAIRIISPCPVTILPGFDKGWVTVQDLSAQECVELLKPINGEKILDLCAAPGGKTTYILEIAPESQVVAVDIDEQRIKRVKENLKRLNCHATVKTGDGRHPEHWAENQQFDRILLDAPCSATGVIRRHPDIKWLRREEDIAQLVQLQSEILDAIWPYLKKSGTLVYATCSILPDENCQQISSFLKRHSDAKLAGTETNDCLGKQIIPELNGGDGFFYARLTKR.

Residues 254–260 (CAAPGGK), Asp-277, Asp-303, and Asp-322 contribute to the S-adenosyl-L-methionine site. Catalysis depends on Cys-375, which acts as the Nucleophile.

This sequence belongs to the class I-like SAM-binding methyltransferase superfamily. RsmB/NOP family.

Its subcellular location is the cytoplasm. The enzyme catalyses cytidine(967) in 16S rRNA + S-adenosyl-L-methionine = 5-methylcytidine(967) in 16S rRNA + S-adenosyl-L-homocysteine + H(+). Functionally, specifically methylates the cytosine at position 967 (m5C967) of 16S rRNA. This chain is Ribosomal RNA small subunit methyltransferase B, found in Photorhabdus laumondii subsp. laumondii (strain DSM 15139 / CIP 105565 / TT01) (Photorhabdus luminescens subsp. laumondii).